The primary structure comprises 450 residues: uncharacterized protein (450 aa).

Belongs to the heat shock protein 70 family.

This is an uncharacterized protein from Escherichia coli (strain K12).